The sequence spans 199 residues: dITP/XTP pyrophosphatase (199 aa).

12–17 (SGNAGK) is a substrate binding site. Residue Asp-73 is the Proton acceptor of the active site. Position 73 (Asp-73) interacts with Mg(2+). Substrate is bound by residues Ser-74, 157–160 (FGYD), Lys-180, and 185–186 (HR).

Belongs to the HAM1 NTPase family. As to quaternary structure, homodimer. It depends on Mg(2+) as a cofactor.

It carries out the reaction XTP + H2O = XMP + diphosphate + H(+). It catalyses the reaction dITP + H2O = dIMP + diphosphate + H(+). The enzyme catalyses ITP + H2O = IMP + diphosphate + H(+). Pyrophosphatase that catalyzes the hydrolysis of nucleoside triphosphates to their monophosphate derivatives, with a high preference for the non-canonical purine nucleotides XTP (xanthosine triphosphate), dITP (deoxyinosine triphosphate) and ITP. Seems to function as a house-cleaning enzyme that removes non-canonical purine nucleotides from the nucleotide pool, thus preventing their incorporation into DNA/RNA and avoiding chromosomal lesions. The sequence is that of dITP/XTP pyrophosphatase from Neisseria meningitidis serogroup A / serotype 4A (strain DSM 15465 / Z2491).